The chain runs to 356 residues: Anthranilate phosphoribosyltransferase (356 aa).

5-phospho-alpha-D-ribose 1-diphosphate contacts are provided by residues glycine 96, 99-100, threonine 104, 106-109, 124-132, and serine 136; these read GD, NIST, and KHGNRSASG. Glycine 96 provides a ligand contact to anthranilate. Serine 108 contacts Mg(2+). Residue asparagine 127 coordinates anthranilate. Residue arginine 182 participates in anthranilate binding. 2 residues coordinate Mg(2+): aspartate 241 and glutamate 242.

Belongs to the anthranilate phosphoribosyltransferase family. Homodimer. Mg(2+) serves as cofactor.

It catalyses the reaction N-(5-phospho-beta-D-ribosyl)anthranilate + diphosphate = 5-phospho-alpha-D-ribose 1-diphosphate + anthranilate. The protein operates within amino-acid biosynthesis; L-tryptophan biosynthesis; L-tryptophan from chorismate: step 2/5. Catalyzes the transfer of the phosphoribosyl group of 5-phosphorylribose-1-pyrophosphate (PRPP) to anthranilate to yield N-(5'-phosphoribosyl)-anthranilate (PRA). In Trichodesmium erythraeum (strain IMS101), this protein is Anthranilate phosphoribosyltransferase.